The chain runs to 152 residues: Transmembrane protein 35B (152 aa).

Residues 1 to 21 form the signal peptide; the sequence is MLVSLGALRVLLGIFFTLTGA. Helical transmembrane passes span 62-82, 85-105, and 111-131; these read AAVG…PPVL, ISNV…VVLE, and YIPA…QFLV.

The protein belongs to the DoxX family.

The protein resides in the membrane. In Rattus norvegicus (Rat), this protein is Transmembrane protein 35B.